The sequence spans 417 residues: Ribulose bisphosphate carboxylase large chain (417 aa).

Asparagine 103 and threonine 153 together coordinate substrate. Lysine 155 functions as the Proton acceptor in the catalytic mechanism. Substrate is bound at residue lysine 157. Residues lysine 181, aspartate 183, and glutamate 184 each coordinate Mg(2+). Lysine 181 is subject to N6-carboxylysine. Histidine 274 (proton acceptor) is an active-site residue. Residues arginine 275, histidine 307, and serine 359 each contribute to the substrate site.

This sequence belongs to the RuBisCO large chain family. Type I subfamily. Heterohexadecamer of 8 large chains and 8 small chains. Mg(2+) is required as a cofactor.

Its subcellular location is the plastid. It is found in the chloroplast. The catalysed reaction is 2 (2R)-3-phosphoglycerate + 2 H(+) = D-ribulose 1,5-bisphosphate + CO2 + H2O. The enzyme catalyses D-ribulose 1,5-bisphosphate + O2 = 2-phosphoglycolate + (2R)-3-phosphoglycerate + 2 H(+). In terms of biological role, ruBisCO catalyzes two reactions: the carboxylation of D-ribulose 1,5-bisphosphate, the primary event in carbon dioxide fixation, as well as the oxidative fragmentation of the pentose substrate in the photorespiration process. Both reactions occur simultaneously and in competition at the same active site. This Acrostichum aureum (Golden leather fern) protein is Ribulose bisphosphate carboxylase large chain.